Consider the following 176-residue polypeptide: Protein GrpE (176 aa).

Belongs to the GrpE family. In terms of assembly, homodimer.

It localises to the cytoplasm. In terms of biological role, participates actively in the response to hyperosmotic and heat shock by preventing the aggregation of stress-denatured proteins, in association with DnaK and GrpE. It is the nucleotide exchange factor for DnaK and may function as a thermosensor. Unfolded proteins bind initially to DnaJ; upon interaction with the DnaJ-bound protein, DnaK hydrolyzes its bound ATP, resulting in the formation of a stable complex. GrpE releases ADP from DnaK; ATP binding to DnaK triggers the release of the substrate protein, thus completing the reaction cycle. Several rounds of ATP-dependent interactions between DnaJ, DnaK and GrpE are required for fully efficient folding. This is Protein GrpE from Rickettsia bellii (strain OSU 85-389).